The primary structure comprises 429 residues: Palmitoyltransferase ZDHHC23 (429 aa).

The Cytoplasmic portion of the chain corresponds to 1–81 (MKPVKKKKTE…RIPWLRGAKK (81 aa)). Residues 82–102 (VNISILPPLVLLPVLLRVASW) form a helical membrane-spanning segment. Residue His-103 is a topological domain, lumenal. A helical transmembrane segment spans residues 104 to 124 (FLLGVVVLTSLPMLALWYYYL). Over 125–130 (THRRKE) the chain is Cytoplasmic. The chain crosses the membrane as a helical span at residues 131-151 (QTLFFLSLGLFSLGYMYYVFL). At 152–159 (QEVVPQGH) the chain is on the lumenal side. The helical transmembrane segment at 160 to 180 (VGPAQLALLTCGLFLILVALY) threads the bilayer. Topologically, residues 181 to 296 (RAKKNPGYLS…NSCVGESNHQ (116 aa)) are cytoplasmic. Residues 212–247 (QEKTKGFPGTDTSGSLNNRTLKDDAKGSSRVGLDSP) form a disordered region. Positions 221 to 230 (TDTSGSLNNR) are enriched in polar residues. In terms of domain architecture, DHHC spans 253–303 (DWCAKCQLVRPARAWHCRICGICVRRMDHHCVWINSCVGESNHQAFILALS). Catalysis depends on Cys-283, which acts as the S-palmitoyl cysteine intermediate. A helical transmembrane segment spans residues 297 to 317 (AFILALSIFLLTSVYGISLTL). The Lumenal portion of the chain corresponds to 318–347 (NTICRDRSLFTALFYCPGVYANYSSALSFT). A helical membrane pass occupies residues 348 to 368 (CVWYSVIITAGMAYIFLIQLI). Topologically, residues 369 to 429 (NISYNVTERE…TVHTPAEDIV (61 aa)) are cytoplasmic. Positions 426–429 (EDIV) are interaction with NOS1.

Belongs to the DHHC palmitoyltransferase family. Interacts with NOS1. Expressed in the brain (at protein level), with highest levels in olfactory bulb, piriform cortex and hippocampus.

It is found in the golgi apparatus membrane. It localises to the golgi apparatus. The protein localises to the trans-Golgi network membrane. The enzyme catalyses L-cysteinyl-[protein] + hexadecanoyl-CoA = S-hexadecanoyl-L-cysteinyl-[protein] + CoA. Its function is as follows. Palmitoyltransferase that could catalyze the addition of palmitate onto various protein substrates and be involved in a variety of cellular processes. Palmitoyltransferase that mediates palmitoylation of KCNMA1, regulating localization of KCNMA1 to the plasma membrane. May be involved in NOS1 regulation and targeting to the synaptic membrane. The chain is Palmitoyltransferase ZDHHC23 from Rattus norvegicus (Rat).